Consider the following 253-residue polypeptide: Rab GTPase-activating protein 1-like, isoform 10 (253 aa).

Positions 8–222 (SMTFEERENR…MNEIQAAKNS (215 aa)) form a coiled coil. The interval 233–253 (TATGTQPLQPAPVTQPPKEST) is disordered.

The sequence is that of Rab GTPase-activating protein 1-like, isoform 10 (RABGAP1L) from Homo sapiens (Human).